The primary structure comprises 150 residues: Transthyretin (150 aa).

Positions Met-1–Ala-20 are cleaved as a signal peptide. Cys-33 is modified (sulfocysteine). L-thyroxine contacts are provided by Lys-38, Glu-77, and Ser-140.

The protein belongs to the transthyretin family. Homotetramer. Dimer of dimers. In the homotetramer, subunits assemble around a central channel that can accommodate two ligand molecules. Sulfonation of the reactive cysteine Cys-33 enhances the stability of the native conformation of TTR, avoiding misassembly of the protein leading to amyloid formation. Detected in serum (at protein level). Detected in liver and choroid plexus.

It localises to the secreted. Thyroid hormone-binding protein. Probably transports thyroxine from the bloodstream to the brain. The sequence is that of Transthyretin (TTR) from Gallus gallus (Chicken).